Consider the following 418-residue polypeptide: Serine hydroxymethyltransferase (418 aa).

Residues Leu-121 and 125–127 (GHL) contribute to the (6S)-5,6,7,8-tetrahydrofolate site. Lys-230 is modified (N6-(pyridoxal phosphate)lysine). Residues Glu-246 and 355-357 (SPF) contribute to the (6S)-5,6,7,8-tetrahydrofolate site.

This sequence belongs to the SHMT family. As to quaternary structure, homodimer. The cofactor is pyridoxal 5'-phosphate.

The protein resides in the cytoplasm. The catalysed reaction is (6R)-5,10-methylene-5,6,7,8-tetrahydrofolate + glycine + H2O = (6S)-5,6,7,8-tetrahydrofolate + L-serine. It participates in one-carbon metabolism; tetrahydrofolate interconversion. The protein operates within amino-acid biosynthesis; glycine biosynthesis; glycine from L-serine: step 1/1. Functionally, catalyzes the reversible interconversion of serine and glycine with tetrahydrofolate (THF) serving as the one-carbon carrier. This reaction serves as the major source of one-carbon groups required for the biosynthesis of purines, thymidylate, methionine, and other important biomolecules. Also exhibits THF-independent aldolase activity toward beta-hydroxyamino acids, producing glycine and aldehydes, via a retro-aldol mechanism. This Streptococcus pneumoniae (strain 70585) protein is Serine hydroxymethyltransferase.